The chain runs to 415 residues: Thylakoid ADP,ATP carrier protein, chloroplastic (415 aa).

A chloroplast-targeting transit peptide spans 1–61 (MGEEKSLLQF…NFASLSVAIR (61 aa)). The next 5 helical transmembrane spans lie at 106-126 (IALL…AFAG), 182-207 (LPQV…KLFR), 219-239 (LGAG…LDVL), 273-293 (GPSL…FDLV), and 309-329 (LLTA…LDTI). Solcar repeat units follow at residues 113-205 (PKDA…YKKL), 213-296 (LSVL…VKKS), and 307-387 (SSLL…VKKL). Residue arginine 187 participates in ADP binding. Arginine 330 contributes to the ADP binding site. The helical transmembrane segment at 362 to 388 (GFVPNALKSMPNSSIKLTTFDIVKKLI) threads the bilayer.

The protein belongs to the mitochondrial carrier (TC 2.A.29) family. Highly expressed in developing photosynthetic organs such as leaves, flower buds and green siliques. Also detected in roots, flowers, mature leaves and stems.

The protein resides in the plastid. Its subcellular location is the chloroplast thylakoid membrane. It is found in the chloroplast envelope. KM and Vmax values toward ATP only are increased by m-chlorocarbonyl cyanide phenylhydrazone (CCCP). The corresponding values for ADP are not affected. Specifically transports adenine nucleotides. Involved in the uptake of ATP into thylakoids in exchange for lumenal ADP. The polypeptide is Thylakoid ADP,ATP carrier protein, chloroplastic (TAAC) (Arabidopsis thaliana (Mouse-ear cress)).